The sequence spans 647 residues: Acetyl-coenzyme A synthetase (647 aa).

CoA-binding positions include 190-193 (RGGR) and Thr-310. Residues 386 to 388 (GEP), 410 to 415 (DTWWQT), Asp-499, and Arg-514 each bind ATP. CoA is bound at residue Ser-522. ATP is bound at residue Arg-525. Val-536, His-538, and Val-541 together coordinate Mg(2+). Arg-583 lines the CoA pocket. At Lys-608 the chain carries N6-acetyllysine.

Belongs to the ATP-dependent AMP-binding enzyme family. Mg(2+) is required as a cofactor. In terms of processing, acetylated. Deacetylation by the SIR2-homolog deacetylase activates the enzyme.

The catalysed reaction is acetate + ATP + CoA = acetyl-CoA + AMP + diphosphate. Catalyzes the conversion of acetate into acetyl-CoA (AcCoA), an essential intermediate at the junction of anabolic and catabolic pathways. AcsA undergoes a two-step reaction. In the first half reaction, AcsA combines acetate with ATP to form acetyl-adenylate (AcAMP) intermediate. In the second half reaction, it can then transfer the acetyl group from AcAMP to the sulfhydryl group of CoA, forming the product AcCoA. The chain is Acetyl-coenzyme A synthetase from Xylella fastidiosa (strain Temecula1 / ATCC 700964).